The chain runs to 1025 residues: Fanconi-associated nuclease 1 (1025 aa).

The segment at 40–68 adopts a UBZ4-type zinc-finger fold; the sequence is KLACPICSKMVPRYDLNWHLDEKCANNDN. Cysteine 43, cysteine 46, histidine 58, and cysteine 63 together coordinate Zn(2+). A disordered region spans residues 98–120; it reads TPGKLSPSKASLTPDPSDSAKMG. At serine 182 the chain carries Phosphoserine. A coiled-coil region spans residues 682–704; sequence VEILQRLHMYEEAVKELESLLSQ. Residues glutamate 842, aspartate 968, glutamate 983, and valine 984 each contribute to the Mn(2+) site. In terms of domain architecture, VRR-NUC spans 903–1015; sequence AESLRAWVAA…GADVEVCHVV (113 aa).

It belongs to the FAN1 family. As to quaternary structure, interacts with FANCD2 (when monoubiquitinated). Interacts with FANCI, MLH1, MLH3 and PMS2. Mn(2+) serves as cofactor. Requires Mg(2+) as cofactor. Ubiquitinated and degraded during mitotic exit by the APC/C-Cdh1 complex.

It localises to the nucleus. The catalysed reaction is Hydrolytically removes 5'-nucleotides successively from the 3'-hydroxy termini of 3'-hydroxy-terminated oligonucleotides.. Nuclease required for the repair of DNA interstrand cross-links (ICL) recruited at sites of DNA damage by monoubiquitinated FANCD2. Specifically involved in repair of ICL-induced DNA breaks by being required for efficient homologous recombination, probably in the resolution of homologous recombination intermediates. Not involved in DNA double-strand breaks resection. Acts as a 5'-3' exonuclease that anchors at a cut end of DNA and cleaves DNA successively at every third nucleotide, allowing to excise an ICL from one strand through flanking incisions. Probably keeps excising with 3'-flap annealing until it reaches and unhooks the ICL. Acts at sites that have a 5'-terminal phosphate anchor at a nick or a 1- or 2-nucleotide flap and is augmented by a 3' flap. Also has endonuclease activity toward 5'-flaps. This chain is Fanconi-associated nuclease 1 (FAN1), found in Ailuropoda melanoleuca (Giant panda).